We begin with the raw amino-acid sequence, 61 residues long: Sperm protamine P1 (61 aa).

The interval 1 to 61 (MARYRHSRSR…RRYHSHRRRY (61 aa)) is disordered.

It belongs to the protamine P1 family. In terms of tissue distribution, testis.

The protein localises to the nucleus. It localises to the chromosome. Its function is as follows. Protamines substitute for histones in the chromatin of sperm during the haploid phase of spermatogenesis. They compact sperm DNA into a highly condensed, stable and inactive complex. This chain is Sperm protamine P1 (PRM1), found in Notoryctes typhlops (Southern marsupial mole).